A 220-amino-acid chain; its full sequence is MQEGKKLLDFRRREMVETLKRYGITNQRVLKAFLEVPRHLFFEVEAWDAAYNDGAYPVGFGQTISQPYTVAFMTSLLVERSPSGKVLEIGTGSGYQAAILDALGYSVFSVERIVALYERAQQRFSRLGLHIACRFGDGTLGWKDEAPFDGIVVTAGAPKAPESLLQQLAENGCMIIPVGGSDAQQMTVIKREEGEFKRELFERFVFVPLVGREGWDDTVF.

Serine 65 is an active-site residue.

It belongs to the methyltransferase superfamily. L-isoaspartyl/D-aspartyl protein methyltransferase family.

It localises to the cytoplasm. It carries out the reaction [protein]-L-isoaspartate + S-adenosyl-L-methionine = [protein]-L-isoaspartate alpha-methyl ester + S-adenosyl-L-homocysteine. Its function is as follows. Catalyzes the methyl esterification of L-isoaspartyl residues in peptides and proteins that result from spontaneous decomposition of normal L-aspartyl and L-asparaginyl residues. It plays a role in the repair and/or degradation of damaged proteins. This is Protein-L-isoaspartate O-methyltransferase from Pelodictyon phaeoclathratiforme (strain DSM 5477 / BU-1).